Consider the following 574-residue polypeptide: Ribonuclease Y (574 aa).

Residues 1–21 traverse the membrane as a helical segment; sequence MSLLDLVLLLLVLGLGGVLLL. Positions 264–327 constitute a KH domain; the sequence is AVTVVPIPSD…EIARMALEEL (64 aa). Positions 390 to 483 constitute an HD domain; that stretch reads VLKHSIQVAH…VAAADALSAA (94 aa).

Belongs to the RNase Y family.

It localises to the cell membrane. Endoribonuclease that initiates mRNA decay. This chain is Ribonuclease Y, found in Thermus thermophilus (strain ATCC BAA-163 / DSM 7039 / HB27).